We begin with the raw amino-acid sequence, 549 residues long: Cation/acetate symporter ActP (549 aa).

13 helical membrane-spanning segments follow: residues 33–53 (WQAIVMFLIFVVFTLGITYWA), 77–97 (LAIAGDYMSAASFLGISALVF), 103–123 (GLIYSLGFLVGWPIILFLIAE), 148–168 (ILSACGSLVVVALYLIAQMVG), 183–203 (IAVVLVGVLMMMYVLFGGMLA), 206–226 (WVQIIKAVLLLFGASFMAFMV), 262–282 (ISALSLGLGLMFGTAGLPHIL), 303–323 (GFMGYFYILTFIIGFGAIMLV), 355–375 (LFLGFISAVAFATILAVVAGL), 404–424 (VSKITVLVLGVIAIILGVLFE), 428–448 (IAFMVGLAFAIAASCNFPIIL), 464–484 (GGWLGLVTAVVLMVLGPTIWV), and 493–513 (IFPYEYPALFSISVAFIGIWF).

It belongs to the sodium:solute symporter (SSF) (TC 2.A.21) family.

It is found in the cell inner membrane. Transports acetate. The sequence is that of Cation/acetate symporter ActP from Citrobacter koseri (strain ATCC BAA-895 / CDC 4225-83 / SGSC4696).